Consider the following 233-residue polypeptide: uncharacterized protein (233 aa).

The chain crosses the membrane as a helical span at residues 21–41 (LNILIAIVSILIVVVAANLFI). Positions 44–163 (PSSKDVSKDS…GEHAATYDSS (120 aa)) are disordered. 3 stretches are compositionally biased toward basic and acidic residues: residues 48–57 (DVSKDSETAQ), 66–108 (KTEK…KKDD), and 135–144 (DVEKTYENPD).

It is found in the cell membrane. This is an uncharacterized protein from Bacillus subtilis (strain 168).